Consider the following 379-residue polypeptide: Chaperone protein DnaJ (379 aa).

One can recognise a J domain in the interval 5 to 69 (EYYERLGVDK…QKRAAYDQYG (65 aa)). The CR-type zinc finger occupies 141–223 (GVEKQVKYNR…CHGSGHEKVA (83 aa)). Residues Cys-154, Cys-157, Cys-171, Cys-174, Cys-197, Cys-200, and Cys-214 each contribute to the Zn(2+) site. 4 CXXCXGXG motif repeats span residues 154–161 (CHTCGGSG), 171–178 (CHKCGGRG), 197–204 (CDVCHGTG), and 211–218 (STTCHGSG).

Belongs to the DnaJ family. Homodimer. It depends on Zn(2+) as a cofactor.

Its subcellular location is the cytoplasm. Participates actively in the response to hyperosmotic and heat shock by preventing the aggregation of stress-denatured proteins and by disaggregating proteins, also in an autonomous, DnaK-independent fashion. Unfolded proteins bind initially to DnaJ; upon interaction with the DnaJ-bound protein, DnaK hydrolyzes its bound ATP, resulting in the formation of a stable complex. GrpE releases ADP from DnaK; ATP binding to DnaK triggers the release of the substrate protein, thus completing the reaction cycle. Several rounds of ATP-dependent interactions between DnaJ, DnaK and GrpE are required for fully efficient folding. Also involved, together with DnaK and GrpE, in the DNA replication of plasmids through activation of initiation proteins. In Lactococcus lactis subsp. cremoris (Streptococcus cremoris), this protein is Chaperone protein DnaJ.